Here is a 175-residue protein sequence, read N- to C-terminus: Large ribosomal subunit protein eL14 (175 aa).

Positions 150–175 (KAAKMDSTEGAKRRMQKAIAARKAKK) are disordered. The span at 152-161 (AKMDSTEGAK) shows a compositional bias: basic and acidic residues. Over residues 162-175 (RRMQKAIAARKAKK) the composition is skewed to basic residues.

This sequence belongs to the eukaryotic ribosomal protein eL14 family.

Functionally, component of the large ribosomal subunit. The ribosome is a large ribonucleoprotein complex responsible for the synthesis of proteins in the cell. This chain is Large ribosomal subunit protein eL14 (RPL14), found in Leishmania donovani.